Reading from the N-terminus, the 289-residue chain is Kinetochore-associated protein MTW1 (289 aa).

A coiled-coil region spans residues 105–147 (RLENQKDLVIVDENELKKSEEKLREKVNDVELAFKKNEMLLKR).

The protein belongs to the mis12 family. In terms of assembly, component of the MIND kinetochore complex, which is composed of at least MTW1, NNF1, NSL1 and DSN1.

It localises to the chromosome. The protein localises to the centromere. It is found in the kinetochore. The protein resides in the cytoplasm. Its subcellular location is the cytoskeleton. It localises to the spindle pole. Its function is as follows. Acts as an essential component of the kinetochore MIND complex, which is required for the spindle checkpoint and kinetochore integrity. MIND plays a role in establishing a bipolar spindle-kinetochore interaction by joining kinetochore subunits contacting DNA to those contacting microtubules. The sequence is that of Kinetochore-associated protein MTW1 (MTW1) from Saccharomyces cerevisiae (strain ATCC 204508 / S288c) (Baker's yeast).